The primary structure comprises 170 residues: Small ribosomal subunit protein uS9 (170 aa).

It belongs to the universal ribosomal protein uS9 family.

This is Small ribosomal subunit protein uS9 from Rhodococcus opacus (strain B4).